We begin with the raw amino-acid sequence, 365 residues long: Caffeic acid 3-O-methyltransferase 1 (365 aa).

130–136 (MNQDKVL) lines the substrate pocket. Residues 162-180 (AFEYHGTDPRFNKVFNKGM) form a substrate binding region. S-adenosyl-L-methionine-binding residues include glycine 208, aspartate 231, aspartate 251, methionine 252, and lysine 265. The active-site Proton acceptor is the histidine 269.

It belongs to the class I-like SAM-binding methyltransferase superfamily. Cation-independent O-methyltransferase family. COMT subfamily. Homodimer. Post-translationally, the N-terminus is blocked. In terms of tissue distribution, xylem.

The catalysed reaction is (E)-caffeate + S-adenosyl-L-methionine = (E)-ferulate + S-adenosyl-L-homocysteine + H(+). Its pathway is aromatic compound metabolism; phenylpropanoid biosynthesis. Its function is as follows. Catalyzes the conversion of caffeic acid to ferulic acid and of 5-hydroxyferulic acid to sinapic acid. The resulting products may subsequently be converted to the corresponding alcohols that are incorporated into lignins. The protein is Caffeic acid 3-O-methyltransferase 1 (OMT1) of Populus tremuloides (Quaking aspen).